The chain runs to 583 residues: Radixin (583 aa).

The FERM domain maps to 5-295 (INVRVTTMDA…GNHELYMRRR (291 aa)). 60–63 (KLNK) contacts a 1,2-diacyl-sn-glycero-3-phospho-(1D-myo-inositol). K83 bears the N6-succinyllysine mark. K278 serves as a coordination point for a 1,2-diacyl-sn-glycero-3-phospho-(1D-myo-inositol). Disordered stretches follow at residues 310–336 (REEK…AEKE), 374–407 (ELDQ…AKQA), and 458–526 (KTKE…RVNK). Residues 374–400 (ELDQERKRAKEEAERLEKERRAAEEAK) are compositionally biased toward basic and acidic residues. Pro residues predominate over residues 469–480 (APPPPPPPPVVP). Basic and acidic residues-rich tracts occupy residues 483–492 (ENEHDEHDEN) and 506–525 (MNHR…ERVN). A Phosphothreonine; by ROCK2 modification is found at T564.

Interacts with CPNE1 (via VWFA domain) and CPNE4 (via VWFA domain). Binds NHERF1. Interacts with NHERF1, NHERF2, LAYN, MME/NEP and ICAM2. Interacts (via FERM domain) with SPN/CD43 cytoplasmic tail. Interacts with CD44. Interacts with CLIC5; may work together in a complex which also includes EZR and MYO6 to stabilize linkages between the plasma membrane and subjacent actin cytoskeleton at the base of stereocilia. In terms of processing, phosphorylated by tyrosine-protein kinases. Phosphorylation by ROCK2 suppresses the head-to-tail association of the N-terminal and C-terminal halves resulting in an opened conformation which is capable of actin and membrane-binding.

The protein resides in the cell membrane. The protein localises to the cytoplasm. It localises to the cytoskeleton. Its subcellular location is the cleavage furrow. It is found in the cell projection. The protein resides in the microvillus. The protein localises to the stereocilium. With respect to regulation, a head-to-tail association, of the N-terminal and C-terminal halves results in a closed conformation (inactive form) which is incapable of actin or membrane-binding. Functionally, probably plays a crucial role in the binding of the barbed end of actin filaments to the plasma membrane. This chain is Radixin (RDX), found in Sus scrofa (Pig).